The primary structure comprises 394 residues: uncharacterized protein (394 aa).

11 consecutive transmembrane segments (helical) span residues 10–30, 50–70, 79–99, 100–120, 138–158, 166–186, 218–238, 243–263, 291–311, 337–357, and 364–384; these read PALI…NYYA, FIVT…VPLG, IVSM…SQSL, AMMI…QILV, TIMS…GLLA, VFWV…RGLP, LLGC…AFLL, FNYS…GALG, WLAI…ILVL, LTAG…LISA, and GWAG…LVWW.

The protein belongs to the major facilitator superfamily.

The protein resides in the cell inner membrane. This is an uncharacterized protein from Escherichia coli (strain K12).